The sequence spans 150 residues: D-aminoacyl-tRNA deacylase (150 aa).

The Gly-cisPro motif, important for rejection of L-amino acids signature appears at 140–141; that stretch reads GP.

Belongs to the DTD family. In terms of assembly, homodimer.

The protein resides in the cytoplasm. It carries out the reaction glycyl-tRNA(Ala) + H2O = tRNA(Ala) + glycine + H(+). The catalysed reaction is a D-aminoacyl-tRNA + H2O = a tRNA + a D-alpha-amino acid + H(+). The enzyme catalyses D-tyrosyl-tRNA(Tyr) + H2O = D-tyrosine + tRNA(Tyr). In terms of biological role, an aminoacyl-tRNA editing enzyme that deacylates mischarged D-aminoacyl-tRNAs. Hydrolyzes D-tyrosyl-tRNA(Tyr) into D-tyrosine and free tRNA(Tyr). May also deacylate mischarged D-leucyl-tRNA(Leu). Also deacylates mischarged glycyl-tRNA(Ala), protecting cells against glycine mischarging by AlaRS. Acts via tRNA-based rather than protein-based catalysis; rejects L-amino acids rather than detecting D-amino acids in the active site. By recycling D-aminoacyl-tRNA to D-amino acids and free tRNA molecules, this enzyme counteracts the toxicity associated with the formation of D-aminoacyl-tRNA entities in vivo and helps enforce protein L-homochirality. The sequence is that of D-aminoacyl-tRNA deacylase from Saccharomyces cerevisiae (strain ATCC 204508 / S288c) (Baker's yeast).